The following is a 313-amino-acid chain: Ribonuclease HIII (313 aa).

Residues 62–88 (AERWTADAETPAPKKPASKKSIPSVYQ) form a disordered region. Residues 96 to 312 (MSVIGSDEVG…TQKAKRIASK (217 aa)) enclose the RNase H type-2 domain. Residues Asp102, Glu103, and Asp207 each contribute to the a divalent metal cation site.

The protein belongs to the RNase HII family. RnhC subfamily. It depends on Mn(2+) as a cofactor. Mg(2+) serves as cofactor.

The protein resides in the cytoplasm. The catalysed reaction is Endonucleolytic cleavage to 5'-phosphomonoester.. Endonuclease that specifically degrades the RNA of RNA-DNA hybrids. The chain is Ribonuclease HIII from Bacillus licheniformis (strain ATCC 14580 / DSM 13 / JCM 2505 / CCUG 7422 / NBRC 12200 / NCIMB 9375 / NCTC 10341 / NRRL NRS-1264 / Gibson 46).